The primary structure comprises 828 residues: Periplasmic nitrate reductase (828 aa).

Positions 1–31 (MKLSRRHFMKANAVAAAAAVAGITIPIAVRA) form a signal peptide, tat-type signal. The 57-residue stretch at 39–95 (IHWDKAPCRFCGVGCGVLVGTQNGRIVASQGDPEAPVNRGLNCIKGYFLPKIMYGQD) folds into the 4Fe-4S Mo/W bis-MGD-type domain. 4 residues coordinate [4Fe-4S] cluster: Cys-46, Cys-49, Cys-53, and Cys-81. Mo-bis(molybdopterin guanine dinucleotide)-binding positions include Lys-83, Gln-150, Asn-175, Cys-179, 212 to 219 (WGSNMAEM), 243 to 247 (STYQH), 262 to 264 (QTD), Met-372, Gln-376, Asn-482, 508 to 509 (SD), Lys-531, Asp-558, and 718 to 727 (TGRVLEHWHT). Phe-794 lines the substrate pocket. The Mo-bis(molybdopterin guanine dinucleotide) site is built by Asn-802 and Lys-819.

It belongs to the prokaryotic molybdopterin-containing oxidoreductase family. NasA/NapA/NarB subfamily. As to quaternary structure, component of the periplasmic nitrate reductase NapAB complex composed of NapA and NapB. [4Fe-4S] cluster serves as cofactor. Requires Mo-bis(molybdopterin guanine dinucleotide) as cofactor. Predicted to be exported by the Tat system. The position of the signal peptide cleavage has not been experimentally proven.

The protein resides in the periplasm. The enzyme catalyses 2 Fe(II)-[cytochrome] + nitrate + 2 H(+) = 2 Fe(III)-[cytochrome] + nitrite + H2O. Functionally, catalytic subunit of the periplasmic nitrate reductase complex NapAB. Receives electrons from NapB and catalyzes the reduction of nitrate to nitrite. The sequence is that of Periplasmic nitrate reductase from Pectobacterium atrosepticum (strain SCRI 1043 / ATCC BAA-672) (Erwinia carotovora subsp. atroseptica).